The primary structure comprises 717 residues: MMTEATKVLYIVVREEGDDDDNNGDDSFRYTRPVLQSTLQLMGCKARHAFKISRRVFELIRSEGSCNTSPENGKEPEFAKEVGGSTCVEKLNCLVVAGDVDKNKSKPFEMYKRRTTVVVSREIFVDVVCDALAEYKYVGRDQRADLILACRIRERKESVTVLLCGTSGCGKSTLSALLGSRLGITTVVSTDSIRHMMRSFADEKQNPLLWASTYHAGEYLDPVAVAESKAKRKAKKLKGSRGVNSNAQKTDAGSNSSTTELLSHKQMAIEGYKAQSEMVIDSLDRLITTWEERNESVVVEGVHLSLNFVMGLMKKHPSIVPFMVYIANEEKHLERFAVRAKYMTLDPAKNKYVKYIRNIRTIQDYLCKRADKHLVPKINNTNVDKSVATIHATVFGCLRRRETGEKLYDTTTNTVSVIDDEHRNQCAANSLTSKGMFQVIQRQGSSRRFMALCNTDGTVAKTWPVASVGKIRKPVVNTEMDDGTEHQLHKAEPVNLQFGHFGISAWPSDGATSHAGSVDDLRADIIETGSRHYSSCCSSPRTSDGPSKELMEEQSVNGSDEDDEEGDDDFHEPDSDEDLSDNNDERNRDEIGSVDEESTKSDEEYDDLAMEDKSYWTDNEEEESRDTISMVSQNNHNEASKTNKDDKYSQNLDLFLKTTNQPLTESLELTSEYRNRMGVAASDKAKMRKRSLSIPPVGKHGSIIDDQILANQTDSVL.

Disordered regions lie at residues 235-259 (KKLK…SSTT) and 532-629 (HYSS…DTIS). Polar residues-rich tracts occupy residues 243 to 259 (VNSN…SSTT) and 532 to 545 (HYSS…TSDG). Positions 559-582 (SDEDDEEGDDDFHEPDSDEDLSDN) are enriched in acidic residues. Residues 583–602 (NDERNRDEIGSVDEESTKSD) show a composition bias toward basic and acidic residues.

In terms of biological role, may be not required for the accumulation of phytic acid in seeds. Phytic acid is the primary storage form of phosphorus in cereal grains and other plant seeds. The polypeptide is P-loop NTPase domain-containing protein LPA1 homolog 2 (Arabidopsis thaliana (Mouse-ear cress)).